The chain runs to 89 residues: Small ribosomal subunit protein bS20 (89 aa).

2 disordered regions span residues 1–25 (MANI…ASMK) and 69–89 (KNAA…IQAS). A compositionally biased stretch (basic residues) spans 7–20 (AIKRAKTSEKRRAH).

Belongs to the bacterial ribosomal protein bS20 family.

In terms of biological role, binds directly to 16S ribosomal RNA. In Geobacillus thermodenitrificans (strain NG80-2), this protein is Small ribosomal subunit protein bS20.